The primary structure comprises 90 residues: Small ribosomal subunit protein bS16 (90 aa).

It belongs to the bacterial ribosomal protein bS16 family.

The chain is Small ribosomal subunit protein bS16 from Bacillus licheniformis (strain ATCC 14580 / DSM 13 / JCM 2505 / CCUG 7422 / NBRC 12200 / NCIMB 9375 / NCTC 10341 / NRRL NRS-1264 / Gibson 46).